Here is a 562-residue protein sequence, read N- to C-terminus: Calmodulin-binding protein 60 F (562 aa).

Residues 1-22 (MENSMNNRGHGHNQEHADNLPE) are disordered. Positions 5-84 (MNNRGHGHNQ…STSRSTEPNK (80 aa)) are calmodulin-binding. The span at 12-22 (HNQEHADNLPE) shows a compositional bias: basic and acidic residues. A DNA-binding region spans residues 154 to 273 (EDDKDWTREH…ALHKKLLKSN (120 aa)).

This sequence belongs to the plant ACBP60 protein family. Interacts with calmodulin (CaM).

It localises to the nucleus. Its function is as follows. Transcription activator that binds DNA in a sequence-specific manner, likely 5'-GAAATTTTGG-3', to promote the expression of target genes. This Arabidopsis thaliana (Mouse-ear cress) protein is Calmodulin-binding protein 60 F.